Reading from the N-terminus, the 1480-residue chain is UDP-N-acetylglucosamine--peptide N-acetylglucosaminyltransferase (1480 aa).

4 TPR repeats span residues 38 to 71 (IFLYAIQGEISFKQKDWIQAFAAYEKAVAESKQK), 113 to 146 (VQVLAQLALLYLMCERYSEAEKLLSSIVESSTSN), 176 to 209 (ATILNNLAICNSKLGNHTLAFDQFQQALDIIKDP), and 288 to 321 (STICYNIGKLELTLGNLDRSVNHFKKSIEYQPSF). Positions 468-485 (PQEKESPKSDKIASEKPL) are enriched in basic and acidic residues. The segment at 468-497 (PQEKESPKSDKIASEKPLVESNPGRSRTPS) is disordered. 2 TPR repeats span residues 613 to 646 (YEPFYNLGNILKADEENKKALQYYSRAIELNPRF) and 648 to 680 (DGYLARGVLYAELHRFETAYLDFSKCIELDPDN). Residues 1093–1128 (LSLDGSDATSSSVDSGIGSRTHSEAPIGGGDKDEGA) form a disordered region. Over residues 1099-1112 (DATSSSVDSGIGSR) the composition is skewed to polar residues. Residues Gln1269, Lys1272, 1333–1336 (HIRR), 1351–1353 (GST), and Asp1357 each bind UDP.

This sequence belongs to the glycosyltransferase 41 family. O-GlcNAc transferase subfamily.

The protein localises to the cytoplasm. It localises to the nucleus. It carries out the reaction L-seryl-[protein] + UDP-N-acetyl-alpha-D-glucosamine = 3-O-(N-acetyl-beta-D-glucosaminyl)-L-seryl-[protein] + UDP + H(+). It catalyses the reaction L-threonyl-[protein] + UDP-N-acetyl-alpha-D-glucosamine = 3-O-(N-acetyl-beta-D-glucosaminyl)-L-threonyl-[protein] + UDP + H(+). It functions in the pathway protein modification; protein glycosylation. Functionally, catalyzes the transfer of a single N-acetylglucosamine from UDP-GlcNAc to a serine or threonine residue in cytoplasmic and nuclear proteins resulting in their modification with a beta-linked N-acetylglucosamine (O-GlcNAc). The protein is UDP-N-acetylglucosamine--peptide N-acetylglucosaminyltransferase of Giardia intestinalis (strain ATCC 50803 / WB clone C6) (Giardia lamblia).